The chain runs to 468 residues: Chromosomal replication initiator protein DnaA (468 aa).

The domain I, interacts with DnaA modulators stretch occupies residues Met1–Ser84. Positions Ser80–Gln106 are disordered. A domain II region spans residues Ser84–Ser131. The domain III, AAA+ region stretch occupies residues Asn132–Ala348. Residues Gly176, Gly178, Lys179, and Thr180 each contribute to the ATP site. A domain IV, binds dsDNA region spans residues Asn349 to Ser468.

The protein belongs to the DnaA family. In terms of assembly, oligomerizes as a right-handed, spiral filament on DNA at oriC.

Its subcellular location is the cytoplasm. In terms of biological role, plays an essential role in the initiation and regulation of chromosomal replication. ATP-DnaA binds to the origin of replication (oriC) to initiate formation of the DNA replication initiation complex once per cell cycle. Binds the DnaA box (a 9 base pair repeat at the origin) and separates the double-stranded (ds)DNA. Forms a right-handed helical filament on oriC DNA; dsDNA binds to the exterior of the filament while single-stranded (ss)DNA is stabiized in the filament's interior. The ATP-DnaA-oriC complex binds and stabilizes one strand of the AT-rich DNA unwinding element (DUE), permitting loading of DNA polymerase. After initiation quickly degrades to an ADP-DnaA complex that is not apt for DNA replication. Binds acidic phospholipids. This is Chromosomal replication initiator protein DnaA from Vibrio parahaemolyticus serotype O3:K6 (strain RIMD 2210633).